Here is a 417-residue protein sequence, read N- to C-terminus: MFTRDMKIAGFDDELWNAMQAEEKRQEAHIELIASENYTSPRVMEAQGSVLTNKYAEGYPGKRYYGGCEFVDIAEDLAIARAKELFGAAYANVQPHSGSQANSAVFMALLKPGDTVLGMSLAHGGHLTHGASVNFSGKIYSAVQYGLNPETGLIDYDEVEALAVEHKPKMIIAGFSAYSQELDFARFRAIADKVGAYLFVDMAHVAGLVAAGVYPDPVPHAHVVATTTHKTLRGPRGGLILACDDEDLQKKLNSAVFPGGQGGPLMHVIAAKAVCFKEAMSDEFKAYQQQVVKNAAAMAEVFIERGFDVVSGGTKNHLFLVSLIKQDITGKDADAALGKAHITVNKNAVPNDPRSPFVTSGLRIGTPAVTTRGFKEAECRNLAGWMCDILDNLEDEAVNSRVREQVEAVCARFPVYG.

(6S)-5,6,7,8-tetrahydrofolate contacts are provided by residues L121 and 125-127 (GHL). K230 carries the N6-(pyridoxal phosphate)lysine modification. 355-357 (SPF) lines the (6S)-5,6,7,8-tetrahydrofolate pocket.

Belongs to the SHMT family. As to quaternary structure, homodimer. Pyridoxal 5'-phosphate is required as a cofactor.

The protein localises to the cytoplasm. It carries out the reaction (6R)-5,10-methylene-5,6,7,8-tetrahydrofolate + glycine + H2O = (6S)-5,6,7,8-tetrahydrofolate + L-serine. It participates in one-carbon metabolism; tetrahydrofolate interconversion. Its pathway is amino-acid biosynthesis; glycine biosynthesis; glycine from L-serine: step 1/1. Functionally, catalyzes the reversible interconversion of serine and glycine with tetrahydrofolate (THF) serving as the one-carbon carrier. This reaction serves as the major source of one-carbon groups required for the biosynthesis of purines, thymidylate, methionine, and other important biomolecules. Also exhibits THF-independent aldolase activity toward beta-hydroxyamino acids, producing glycine and aldehydes, via a retro-aldol mechanism. The polypeptide is Serine hydroxymethyltransferase (Marinobacter nauticus (strain ATCC 700491 / DSM 11845 / VT8) (Marinobacter aquaeolei)).